Consider the following 1658-residue polypeptide: Silent chromatin protein ESC1 (1658 aa).

Residues 36–54 (DSKMKDQHGYSRVHNDKYR) are compositionally biased toward basic and acidic residues. Disordered stretches follow at residues 36–76 (DSKM…SSHI) and 156–499 (TSFQ…LENE). 2 stretches are compositionally biased toward acidic residues: residues 205 to 214 (LENDEYELSE) and 245 to 254 (SNDEYAEEEG). Residues 262–286 (GQEQANVENATQISSSDSSEGQNYS) show a composition bias toward polar residues. Acidic residues predominate over residues 289 to 305 (VEMELEDDIDVESDAEK). The segment covering 335–352 (VIEKYESDEHKVHQRYSE) has biased composition (basic and acidic residues). Over residues 365-375 (VDDESEDEESQ) the composition is skewed to acidic residues. Positions 386 to 397 (VYHHNEHELDDK) are enriched in basic and acidic residues. Over residues 398 to 407 (ELIEDIESSD) the composition is skewed to acidic residues. The segment covering 408–417 (SESQSAQESE) has biased composition (low complexity). 3 stretches are compositionally biased toward basic and acidic residues: residues 425–435 (EYKMKNEKSTS), 442–461 (SESR…KVEQ), and 471–482 (DDIIRSSLDKNF). At threonine 500 the chain carries Phosphothreonine. Serine 532 is modified (phosphoserine). 2 disordered regions span residues 550–584 (SRNS…DESE) and 589–608 (LKDF…GDLS). Residues 568–577 (GHSNGSNLSG) show a composition bias toward polar residues. Phosphoserine is present on residues serine 579, serine 583, serine 608, and serine 662. Disordered stretches follow at residues 770 to 819 (SKET…EDNT), 863 to 964 (EMSS…VKGT), and 1082 to 1115 (ENNT…GSAK). The segment covering 800 to 812 (QSKNFPGVANSTD) has biased composition (polar residues). A phosphoserine mark is found at serine 865 and serine 866. A compositionally biased stretch (basic and acidic residues) spans 869–878 (ECVKQNDDGS). A compositionally biased stretch (polar residues) spans 879 to 905 (KTQISFSTDSPDNFQESNDNTEFSSTK). Serine 888 and serine 911 each carry phosphoserine. Residues 918 to 931 (SLKKELTKAEVVDK) show a composition bias toward basic and acidic residues. Positions 932–956 (LDEEESEDSYEQDYADPEPGNDEGS) are enriched in acidic residues. Phosphoserine occurs at positions 937, 1092, 1096, 1098, 1166, 1176, and 1178. Over residues 1082–1096 (ENNTNMHDQVSQACS) the composition is skewed to polar residues. Residues 1097 to 1115 (DSDRDQDSTAEKNVEGSAK) show a composition bias toward basic and acidic residues. The segment covering 1197–1207 (STDASVNMKSV) has biased composition (polar residues). The disordered stretch occupies residues 1197–1216 (STDASVNMKSVSSKERDSDE). Phosphoserine occurs at positions 1214 and 1254. Positions 1261-1272 (VKDKENLHKSEE) are enriched in basic and acidic residues. The tract at residues 1261–1315 (VKDKENLHKSEEPLVEGLQSEQHFEKKDHSENEEEFDTIYGDITSANIHSNAPDD) is disordered. Phosphoserine occurs at positions 1290, 1326, and 1332. Disordered regions lie at residues 1334 to 1482 (RLIE…TSPE) and 1503 to 1658 (PATT…SVDK). The segment covering 1335-1366 (LIEDSRRGKNQEESDEVNTSRERDLTFEKSVN) has biased composition (basic and acidic residues). 4 positions are modified to phosphoserine: serine 1403, serine 1409, serine 1450, and serine 1454. The segment covering 1407-1423 (LNSEPEEAELYELEIEG) has biased composition (acidic residues). The span at 1463–1479 (YPYSNSENITAEKSAPT) shows a compositional bias: polar residues. Residues 1507 to 1537 (LEKHDKTNVTSVLDDRSEHLSSHDVDNEPHD) show a composition bias toward basic and acidic residues. Phosphoserine is present on serine 1539. Composition is skewed to basic and acidic residues over residues 1550–1564 (PEHQ…VEVK) and 1575–1591 (VLEE…DKSS). Phosphoserine occurs at positions 1590 and 1591. The span at 1607–1626 (TKAKKKSRKRNYNSRRRKRK) shows a compositional bias: basic residues. Polar residues predominate over residues 1648-1658 (RGQNTHPSVDK).

In terms of assembly, interacts with SIR4.

The protein resides in the nucleus. Involved in the clustering of telomeres at the nuclear periphery, forming discrete subcompartments that accumulate a complex of histone-binding silencing factors like SIR4. Required for SIR4-mediated anchoring and partitioning of plasmids. The sequence is that of Silent chromatin protein ESC1 (ESC1) from Saccharomyces cerevisiae (strain ATCC 204508 / S288c) (Baker's yeast).